Here is a 260-residue protein sequence, read N- to C-terminus: 5'-nucleotidase SurE (260 aa).

The a divalent metal cation site is built by D13, D14, S44, and N102.

The protein belongs to the SurE nucleotidase family. The cofactor is a divalent metal cation.

The protein localises to the cytoplasm. It carries out the reaction a ribonucleoside 5'-phosphate + H2O = a ribonucleoside + phosphate. Functionally, nucleotidase that shows phosphatase activity on nucleoside 5'-monophosphates. This Christiangramia forsetii (strain DSM 17595 / CGMCC 1.15422 / KT0803) (Gramella forsetii) protein is 5'-nucleotidase SurE.